A 457-amino-acid chain; its full sequence is MITREFDTIAAISTPLGEGAIGIVRLSGTDSFAIAQKIFKGKDLNKVASHTLNYGHIIDPLTGKVMDEVMVGAMKSPKTFTREDIIEINTHGGIAVTNEILQLAIREGARLAEPGEFTKRAFLNGRVDLTQAEAVMDIIRAKTDKAMNIAVKQLDGSLSDLINNTRQEILNTLAQVEVNIDYPEYDDVEEATTAVVREKTMEFEQLLTKLLRTARRGKILREGISTAIIGRPNVGKSSLLNNLLREDKAIVTDIAGTTRDVIEEYVNINGVPLKLIDTAGIRETDDIVEQIGVERSKKALKEADLVLLVLNASEPLTAQDRQLLEISQETNRIILLNKTDLPETIETSELPEDVIRISVLKNQNIDKIEERINNLFFENAGLVEQDATYLSNARHISLIEKAVESLQAVNQGLELGMPVDLLQVDLTRTWEILGEITGDAAPDELITQLFSQFCLGK.

Residues R25, E87, and R126 each coordinate (6S)-5-formyl-5,6,7,8-tetrahydrofolate. The region spanning 223-377 (GISTAIIGRP…IEERINNLFF (155 aa)) is the TrmE-type G domain. N233 contacts K(+). Residues 233–238 (NVGKSS), 252–258 (TDIAGTT), and 277–280 (DTAG) each bind GTP. S237 contributes to the Mg(2+) binding site. K(+)-binding residues include T252, I254, and T257. T258 is a binding site for Mg(2+). Position 457 (K457) interacts with (6S)-5-formyl-5,6,7,8-tetrahydrofolate.

Belongs to the TRAFAC class TrmE-Era-EngA-EngB-Septin-like GTPase superfamily. TrmE GTPase family. As to quaternary structure, homodimer. Heterotetramer of two MnmE and two MnmG subunits. K(+) is required as a cofactor.

The protein resides in the cytoplasm. Its function is as follows. Exhibits a very high intrinsic GTPase hydrolysis rate. Involved in the addition of a carboxymethylaminomethyl (cmnm) group at the wobble position (U34) of certain tRNAs, forming tRNA-cmnm(5)s(2)U34. This Streptococcus pneumoniae serotype 4 (strain ATCC BAA-334 / TIGR4) protein is tRNA modification GTPase MnmE.